The chain runs to 93 residues: Putative septation protein SpoVG (93 aa).

The protein belongs to the SpoVG family.

Could be involved in septation. The sequence is that of Putative septation protein SpoVG from Lachnoclostridium phytofermentans (strain ATCC 700394 / DSM 18823 / ISDg) (Clostridium phytofermentans).